Here is a 193-residue protein sequence, read N- to C-terminus: MAVPASPQHPRGYGILLLTLLLKALATTASACNHLRPQDATFSHDSLQLFRDMAPTLLQLCPQHNASCSFNDTILDTSNTRQADKTTHDILQHLFKILSSPSTPAHWNDSQRQSLLNRIHRYTQHLEQCLDSSDTRSRTRWPRNLHLTIKKHFSCLHTFLQDNDYSACAWEHVRLQARAWFLHIHNLTGNTRT.

The signal sequence occupies residues 1-31 (MAVPASPQHPRGYGILLLTLLLKALATTASA). 3 disulfide bridges follow: Cys32-Cys129, Cys61-Cys155, and Cys68-Cys168. Residues Asn65, Asn71, Asn108, and Asn186 are each glycosylated (N-linked (GlcNAc...) asparagine).

It belongs to the alpha/beta interferon family.

It is found in the secreted. Functionally, has antiviral activities. In Gallus gallus (Chicken), this protein is Interferon type A3 (IFNA3).